A 106-amino-acid polypeptide reads, in one-letter code: Integration host factor subunit alpha (106 aa).

This sequence belongs to the bacterial histone-like protein family. As to quaternary structure, heterodimer of an alpha and a beta chain.

In terms of biological role, this protein is one of the two subunits of integration host factor, a specific DNA-binding protein that functions in genetic recombination as well as in transcriptional and translational control. In Nitrobacter winogradskyi (strain ATCC 25391 / DSM 10237 / CIP 104748 / NCIMB 11846 / Nb-255), this protein is Integration host factor subunit alpha.